Here is a 325-residue protein sequence, read N- to C-terminus: MNALTAVHNNAVDSGQDYSGFTLIPSAQSPRLLELTFTEQTTKQFLEQVAEWPVQALEYKSFLRFRVGKILDDLCANQLQPLLLKTLLNRAEGALLINAVGIDDVAQADEMVKLATAVAHLIGRSNFDAMSGQYYARFVVKNVDNSDSYLRQPHRVMELHNDGTYVEEITDYVLMMKIDEQNMQGGNSLLLHLDDWEHLDHYFRHPLARRPMRFAAPPSKNVSKDVFHPVFDVDQQGRPVMRYIDQFVQPKDFEEGVWLSELSDAIETSKGILSVPVPVGKFLLINNLFWLHGRDRFTPHPDLRRELMRQRGYFAYATHHYQTHQ.

Residues histidine 160, aspartate 162, and histidine 292 each coordinate Fe cation.

It belongs to the glutarate hydroxylase family. In terms of assembly, homotetramer. Requires Fe(2+) as cofactor.

It carries out the reaction glutarate + 2-oxoglutarate + O2 = (S)-2-hydroxyglutarate + succinate + CO2. Its pathway is amino-acid degradation. Its function is as follows. Acts as an alpha-ketoglutarate-dependent dioxygenase catalyzing hydroxylation of glutarate (GA) to L-2-hydroxyglutarate (L2HG). Functions in a L-lysine degradation pathway that proceeds via cadaverine, glutarate and L-2-hydroxyglutarate. This is Glutarate 2-hydroxylase from Escherichia coli (strain 55989 / EAEC).